A 294-amino-acid chain; its full sequence is Eukaryotic translation initiation factor 3 subunit F (294 aa).

The region spanning 7–155 (VNVHPGVYMN…VRAYLRSKAG (149 aa)) is the MPN domain.

Belongs to the eIF-3 subunit F family. As to quaternary structure, component of the eukaryotic translation initiation factor 3 (eIF-3) complex.

The protein resides in the cytoplasm. Functionally, component of the eukaryotic translation initiation factor 3 (eIF-3) complex, which is involved in protein synthesis of a specialized repertoire of mRNAs and, together with other initiation factors, stimulates binding of mRNA and methionyl-tRNAi to the 40S ribosome. The eIF-3 complex specifically targets and initiates translation of a subset of mRNAs involved in cell proliferation. This is Eukaryotic translation initiation factor 3 subunit F from Caenorhabditis elegans.